A 154-amino-acid polypeptide reads, in one-letter code: MAQSINITELNLPQLEMLKNQLDQEVEFLSTSIAQLKVVQTKYVEAKDCLNVLNKSNEGKELLVPLTSSMYVPGKLHDVEHVLIDVGTGYYVEKTAEDAKDFFKRKIDFLTKQMEKIQPALQEKHAMKQAVMEMMSQKIRQLTALGAAQATAKA.

Alanine 2 is modified (N-acetylalanine). Position 42 is an N6-acetyllysine (lysine 42). Serine 56 carries the phosphoserine modification.

It belongs to the prefoldin subunit alpha family. In terms of assembly, heterohexamer of two PFD-alpha type and four PFD-beta type subunits.

It localises to the nucleus. Its function is as follows. Binds specifically to cytosolic chaperonin (c-CPN) and transfers target proteins to it. Binds to nascent polypeptide chain and promotes folding in an environment in which there are many competing pathways for nonnative proteins. Represses the transcriptional activity of MYC. This is Prefoldin subunit 5 (PFDN5) from Pongo abelii (Sumatran orangutan).